The sequence spans 704 residues: SH3KBP1-binding protein 1 (704 aa).

At Ala2 the chain carries N-acetylalanine. Positions 19–88 (EVIHLNVGGK…LRTKELDPRG (70 aa)) constitute a BTB domain. Residues 145 to 165 (LVGPQQAGGRPAPVRRSNTMP) form a disordered region. A Phosphothreonine modification is found at Thr163. WD repeat units follow at residues 233–280 (RLDW…GGSE), 283–322 (VFHL…WQVQ), 324–359 (VQPI…LRMK), 428–466 (VHRS…GMIS), and 548–586 (LECE…DGLG). Low complexity predominate over residues 611 to 644 (ASSRGSLPSPSPRTSLTSLHSAFSNTSLSSRRGS). A disordered region spans residues 611–704 (ASSRGSLPSP…PKTKLNETSF (94 aa)). Residues 618 to 623 (PSPSPR) carry the PXXXPR motif. Ser644 and Ser646 each carry phosphoserine. Positions 678-683 (PTPAPR) match the PXXXPR motif.

The protein belongs to the KCTD3 family. Monomer. Interacts with CUL3; interaction is direct and forms a 5:5 heterodecamer. Interacts (via PXXXPR motifs) with SH3KBP1 (via SH3 domains). Directly interacts with cathepsin B/CTSB.

Its subcellular location is the lysosome. Inhibits CBL-SH3KBP1 complex mediated down-regulation of EGFR signaling by sequestration of SH3KBP1. Binds to SH3KBP1 and prevents its interaction with CBL and inhibits translocation of SH3KBP1 to EGFR containing vesicles upon EGF stimulation. This is SH3KBP1-binding protein 1 (SHKBP1) from Bos taurus (Bovine).